Here is a 388-residue protein sequence, read N- to C-terminus: Succinate--CoA ligase [ADP-forming] subunit beta (388 aa).

In terms of domain architecture, ATP-grasp spans Lys-9–His-244. ATP is bound by residues Lys-46, Gly-53–Gly-55, Glu-99, Thr-102, and Glu-107. The Mg(2+) site is built by Asn-199 and Asp-213. Residues Asn-264 and Gly-321 to Val-323 contribute to the substrate site.

Belongs to the succinate/malate CoA ligase beta subunit family. In terms of assembly, heterotetramer of two alpha and two beta subunits. The cofactor is Mg(2+).

The catalysed reaction is succinate + ATP + CoA = succinyl-CoA + ADP + phosphate. The enzyme catalyses GTP + succinate + CoA = succinyl-CoA + GDP + phosphate. The protein operates within carbohydrate metabolism; tricarboxylic acid cycle; succinate from succinyl-CoA (ligase route): step 1/1. Its function is as follows. Succinyl-CoA synthetase functions in the citric acid cycle (TCA), coupling the hydrolysis of succinyl-CoA to the synthesis of either ATP or GTP and thus represents the only step of substrate-level phosphorylation in the TCA. The beta subunit provides nucleotide specificity of the enzyme and binds the substrate succinate, while the binding sites for coenzyme A and phosphate are found in the alpha subunit. This is Succinate--CoA ligase [ADP-forming] subunit beta from Erwinia tasmaniensis (strain DSM 17950 / CFBP 7177 / CIP 109463 / NCPPB 4357 / Et1/99).